The primary structure comprises 161 residues: Ribonuclease H (161 aa).

The 144-residue stretch at 12–155 (QPQHVVIYTD…ADALANKGVE (144 aa)) folds into the RNase H type-1 domain. 4 residues coordinate Mg(2+): Asp21, Glu59, Asp81, and Asp147.

This sequence belongs to the RNase H family. As to quaternary structure, monomer. Requires Mg(2+) as cofactor.

Its subcellular location is the cytoplasm. It carries out the reaction Endonucleolytic cleavage to 5'-phosphomonoester.. Its function is as follows. Endonuclease that specifically degrades the RNA of RNA-DNA hybrids. The chain is Ribonuclease H from Polaromonas naphthalenivorans (strain CJ2).